Reading from the N-terminus, the 319-residue chain is tRNA dimethylallyltransferase (319 aa).

Position 11-18 (11-18 (GPTCSGKS)) interacts with ATP. 13-18 (TCSGKS) lines the substrate pocket. Interaction with substrate tRNA stretches follow at residues 36–39 (DSMQ) and 160–164 (QRIAR).

This sequence belongs to the IPP transferase family. In terms of assembly, monomer. Requires Mg(2+) as cofactor.

It carries out the reaction adenosine(37) in tRNA + dimethylallyl diphosphate = N(6)-dimethylallyladenosine(37) in tRNA + diphosphate. In terms of biological role, catalyzes the transfer of a dimethylallyl group onto the adenine at position 37 in tRNAs that read codons beginning with uridine, leading to the formation of N6-(dimethylallyl)adenosine (i(6)A). This Granulibacter bethesdensis (strain ATCC BAA-1260 / CGDNIH1) protein is tRNA dimethylallyltransferase.